The following is a 158-amino-acid chain: Protein Smg homolog (158 aa).

It belongs to the Smg family.

This chain is Protein Smg homolog, found in Shewanella sp. (strain MR-4).